The sequence spans 201 residues: UPF0177 protein YajF (201 aa).

Transmembrane regions (helical) follow at residues 10 to 30 (TVILALFLLFLSQVPLYYVEY), 44 to 64 (ITVNFILIGLLIILIAIMLGI), 82 to 102 (ILILILIIPSVALDILFSQFI), 119 to 139 (VMGSLLWFGKILGVALLAPIL), and 159 to 179 (FVFSSLLFTFMHSGYSWVFLI).

Belongs to the UPF0177 family.

Its subcellular location is the cell membrane. The sequence is that of UPF0177 protein YajF (yajF) from Lactococcus lactis subsp. lactis (strain IL1403) (Streptococcus lactis).